The following is a 642-amino-acid chain: RNA polymerase sigma factor RpoD (642 aa).

Residues 199-228 (HLETTAPEKPSNDNSDENEDDEESEEDADE) are disordered. The segment covering 212–228 (NSDENEDDEESEEDADE) has biased composition (acidic residues). The sigma-70 factor domain-2 stretch occupies residues 403–473 (MIQANLRLVI…TRSIADQART (71 aa)). Positions 427–430 (DLIQ) match the Interaction with polymerase core subunit RpoC motif. Residues 482 to 558 (ETINKMNRIS…DANNVAPADA (77 aa)) form a sigma-70 factor domain-3 region. The tract at residues 571–624 (ILESLTPREAKVLRMRFGIDMNTDHTLEEVGRQFDVTRERIRQIEAKALRKLRH) is sigma-70 factor domain-4. Positions 597–616 (LEEVGRQFDVTRERIRQIEA) form a DNA-binding region, H-T-H motif.

It belongs to the sigma-70 factor family. RpoD/SigA subfamily. In terms of assembly, interacts transiently with the RNA polymerase catalytic core.

The protein localises to the cytoplasm. Functionally, sigma factors are initiation factors that promote the attachment of RNA polymerase to specific initiation sites and are then released. This sigma factor is the primary sigma factor during exponential growth. The sequence is that of RNA polymerase sigma factor RpoD from Neisseria gonorrhoeae.